The primary structure comprises 71 residues: Ranatuerin-2Va (71 aa).

Positions 1–22 are cleaved as a signal peptide; that stretch reads MFTLKKSFLLLFFLGTITLSLC. A propeptide spanning residues 23-43 is cleaved from the precursor; sequence EQERGADEDDGVEMTEEEVKR. Residues C66 and C71 are joined by a disulfide bond.

Expressed by the skin glands.

The protein localises to the secreted. Antimicrobial peptide. This Odorrana versabilis (Chinese bamboo leaf odorous frog) protein is Ranatuerin-2Va.